A 546-amino-acid polypeptide reads, in one-letter code: MADATSPFNVSILDNSTKLSEMVESGWNVLASTSVQAFNEAMDVLEESYPLCKKMLDHNNLFPERDPNDTRIWCNATYDTVLCWPPTPANSSVTLQCPHMKGLDPNKNITKDCHVSGVWSGRNAGEMGPTLPGWTNFTMCYTDEVIYIMQNLNNESLTIAQEVARNARKLEFVGLGLSLVSLILAISIFSYFRRLRVFRNLLHLHLMIAMLMVVILRLVLYIDLIFTGENGPHTNSAEGKTINTMPIVCEGMFFFLEYFKTVTFCWMFLEGIYLNNQIVFGFFNSEPKLLPYFIAGYGIPLVHTMLWLLVVLIKKDFKVERCLGSYYLEPEFWILDGPRMAELVINLFFICNVIRVLYSKVRESNNTSEAGLKKSVKAAMMLLPLLGVPNIMQTIPFAPTRDNIMVFAVWTYTASFTYMYQGLMVASIYCFTNKEVNHVLKTFYARYRLLHKSQNELRRGSRSVASHYAAKNGTANASAPQTNNADEFGKLSPFPSRSKKGSDDSTTKLMKDAVMEEEKNANNNGYGSAGEMTPLREGSNRSTKSP.

The Cytoplasmic segment spans residues 1 to 171 (MADATSPFNV…EVARNARKLE (171 aa)). A helical membrane pass occupies residues 172-192 (FVGLGLSLVSLILAISIFSYF). Over 193-205 (RRLRVFRNLLHLH) the chain is Extracellular. Residues 206 to 226 (LMIAMLMVVILRLVLYIDLIF) form a helical membrane-spanning segment. The Cytoplasmic segment spans residues 227-251 (TGENGPHTNSAEGKTINTMPIVCEG). A helical membrane pass occupies residues 252-272 (MFFFLEYFKTVTFCWMFLEGI). At 273–292 (YLNNQIVFGFFNSEPKLLPY) the chain is on the extracellular side. Residues 293 to 313 (FIAGYGIPLVHTMLWLLVVLI) form a helical membrane-spanning segment. Residues 314 to 333 (KKDFKVERCLGSYYLEPEFW) lie on the Cytoplasmic side of the membrane. The helical transmembrane segment at 334 to 354 (ILDGPRMAELVINLFFICNVI) threads the bilayer. The Extracellular portion of the chain corresponds to 355-377 (RVLYSKVRESNNTSEAGLKKSVK). 2 N-linked (GlcNAc...) asparagine glycosylation sites follow: Asn-365 and Asn-366. Residues 378–398 (AAMMLLPLLGVPNIMQTIPFA) traverse the membrane as a helical segment. Residues 399–403 (PTRDN) lie on the Cytoplasmic side of the membrane. A helical membrane pass occupies residues 404–424 (IMVFAVWTYTASFTYMYQGLM). Residues 425–546 (VASIYCFTNK…EGSNRSTKSP (122 aa)) lie on the Extracellular side of the membrane. Residues Asn-472 and Asn-476 are each glycosylated (N-linked (GlcNAc...) asparagine). The tract at residues 472-546 (NGTANASAPQ…EGSNRSTKSP (75 aa)) is disordered. A compositionally biased stretch (polar residues) spans 473–485 (GTANASAPQTNNA). The segment covering 500–520 (KGSDDSTTKLMKDAVMEEEKN) has biased composition (basic and acidic residues). N-linked (GlcNAc...) asparagine glycosylation is present at Asn-540.

The protein belongs to the G-protein coupled receptor 2 family. As to expression, expression was observed in the mechanosensory neuron pairs PLM, ALM, FLP, OLQD, and OLQV, the chemosensory neurons PHA, PHB, RMEV, the ring motor neurons RMED, and the pharyngeal interneuron pair I1. Expression in sensory neurons PHA, PQR and URY are responsible for mate searching behavior. Expressed in AIY, RIM, RIA, and other neurons.

It localises to the cell membrane. Its function is as follows. G-protein coupled receptor for PDF neuropeptides. Plays a role in responses to environmental signals, including chemicals and touch, and in modulating locomotory behaviors. Capable of transducing signals via an adenylate cyclase acy-1 cAMP-dependent pathway. Required to regulate the sex-specific expression of TGFbeta-like daf-7 in the ASJ chemosensory neurons, perhaps acting via acy-1. Involved in modulating mate searching behavior independent of nutritional status. In the presence of food, plays a role in initiating and extending exploratory roaming behavior, perhaps acting in AIY, RIM, RIA, and other neurons, in opposition to 5-hydroxytryptamine (serotonin) signaling. Involved in mediating arousal from the sleep-like state called lethargus, which occurs during molting between larval and adult stages, in part by regulating touch sensitivity. May play a role in circadian rhythms of locomotor activity. G-protein coupled receptor which is activated by neuropeptides PDF-1 and PDF-2. Probably acts through the G-alpha(s) type of G proteins to elevate cAMP levels. In terms of biological role, G-protein coupled receptor which is activated by neuropeptides PDF-1 and PDF-2; however, activation is lower compared to isoforms a and b. Probably inhibits cAMP levels through the G-alpha(i/o) type of G proteins. The sequence is that of Calcitonin receptor-like protein 1 (pdfr-1) from Caenorhabditis elegans.